The primary structure comprises 274 residues: UPF0173 metal-dependent hydrolase AnaeK_1127 (274 aa).

It belongs to the UPF0173 family.

The sequence is that of UPF0173 metal-dependent hydrolase AnaeK_1127 from Anaeromyxobacter sp. (strain K).